The primary structure comprises 872 residues: MKQMSSAQVRQMWLDFWATKGHAVEPSVSLVPVNDPTLLWINSGVATLKKYFDGTIIPENPRITNAQKAIRTNDIENVGKTARHHTMFEMLGNFSIGDYFRDEAIEWAYELLTSPEWFDFPKDKLYMTYYPDDKDSYNRWIAMGVEPSHLIPIEDNFWEIGAGPSGPDTEIFFDRGEAFDPENIGVRLLEEDIENDRYIEIWNIVLSQFNADPAVPRSEYKELPHKNIDTGAGLERLVAVIQGAKTNFETDLFMPIIREVEKLSGKVYDQDGDNMSFKVIADHIRSLSFAIGDGALPGNEGRGYVLRRLLRRASMHGQKLGINEPFLYKLVPTVGKIMESYYPEVLEKQEFIEKIIKSEEESFARTLHSGQHFAETIVADLKAKGQTVISGQDAFKLYDTYGFPLELTEEIAEEADMTVDRAGFEAAMKEQQDRARASVVKGGSMGMQNETLQAITVESAFNYEKEELTAELLAIVADDAAVESVETGTAALIFAETPFYAEMGGQVADHGQIFDGAGNLVAQVTDVQKAPNGQPLHTVEVLAPLALGQSYKLEIDHSRRHRVMKNHTATHLLHAALHNVLGNHATQAGSLNEVEFLRFDFTHFQAVTAEELRAIEQEVNEKIWEALAIETVETDIDTAKEMGAMALFGEKYGKEVRVVTIGDYSVELCGGTHVGNTSEIGIFKIVKEEGIGSGTRRILAVTSKEAFEAYREEEEALKAIAATLKAPQIKEVPHKVEALQEQLRQLQKENAELKEKAAAAASGEVFKDVQEANGHSFIASQVSVSDAGALRTFADTWKQKDYSDVLVLVAAIGDKVNVLAASKTKDVHAGNLIKELAPIVDGRGGGKPDMAMAGGSKQSAIPDLLAAVAEKL.

The Zn(2+) site is built by His567, His571, Cys669, and His673.

This sequence belongs to the class-II aminoacyl-tRNA synthetase family. Requires Zn(2+) as cofactor.

The protein localises to the cytoplasm. The catalysed reaction is tRNA(Ala) + L-alanine + ATP = L-alanyl-tRNA(Ala) + AMP + diphosphate. Functionally, catalyzes the attachment of alanine to tRNA(Ala) in a two-step reaction: alanine is first activated by ATP to form Ala-AMP and then transferred to the acceptor end of tRNA(Ala). Also edits incorrectly charged Ser-tRNA(Ala) and Gly-tRNA(Ala) via its editing domain. This chain is Alanine--tRNA ligase, found in Streptococcus sanguinis (strain SK36).